The sequence spans 239 residues: Probable transcriptional regulatory protein Ajs_1898 (239 aa).

The disordered stretch occupies residues 1 to 21 (MAGHSKWANIQHRKGRQDEKR).

This sequence belongs to the TACO1 family.

The protein localises to the cytoplasm. This chain is Probable transcriptional regulatory protein Ajs_1898, found in Acidovorax sp. (strain JS42).